Here is a 586-residue protein sequence, read N- to C-terminus: Acyl-coenzyme A synthetase ACSM3, mitochondrial (586 aa).

Residues Met1 to Ala27 constitute a mitochondrion transit peptide. Residues Lys73 and Lys106 each carry the N6-succinyllysine modification. An N6-acetyllysine modification is found at Lys157. Residues Thr235–Lys243, Glu374–Thr379, Asp461, Arg476, and Lys572 contribute to the ATP site.

The protein belongs to the ATP-dependent AMP-binding enzyme family. Mg(2+) is required as a cofactor. Requires Mn(2+) as cofactor.

It is found in the mitochondrion. The protein resides in the mitochondrion matrix. The catalysed reaction is a medium-chain fatty acid + ATP + CoA = a medium-chain fatty acyl-CoA + AMP + diphosphate. It catalyses the reaction propanoate + ATP + CoA = propanoyl-CoA + AMP + diphosphate. The enzyme catalyses butanoate + ATP + CoA = butanoyl-CoA + AMP + diphosphate. It carries out the reaction 2-methylpropanoate + ATP + CoA = 2-methylpropanoyl-CoA + AMP + diphosphate. The catalysed reaction is 2-methylbutanoate + ATP + CoA = 2-methylbutanoyl-CoA + AMP + diphosphate. It catalyses the reaction octanoate + ATP + CoA = octanoyl-CoA + AMP + diphosphate. In terms of biological role, catalyzes the activation of fatty acids by CoA to produce an acyl-CoA, the first step in fatty acid metabolism. Capable of activating medium-chain fatty acids with a preference for isobutyrate among fatty acids with 2-6 carbon atoms. This is Acyl-coenzyme A synthetase ACSM3, mitochondrial (ACSM3) from Homo sapiens (Human).